Reading from the N-terminus, the 505-residue chain is ATP synthase subunit alpha (505 aa).

171–178 (GDRQTGKT) provides a ligand contact to ATP.

The protein belongs to the ATPase alpha/beta chains family. As to quaternary structure, F-type ATPases have 2 components, CF(1) - the catalytic core - and CF(0) - the membrane proton channel. CF(1) has five subunits: alpha(3), beta(3), gamma(1), delta(1), epsilon(1). CF(0) has three main subunits: a(1), b(2) and c(9-12). The alpha and beta chains form an alternating ring which encloses part of the gamma chain. CF(1) is attached to CF(0) by a central stalk formed by the gamma and epsilon chains, while a peripheral stalk is formed by the delta and b chains.

The protein resides in the cell inner membrane. The catalysed reaction is ATP + H2O + 4 H(+)(in) = ADP + phosphate + 5 H(+)(out). In terms of biological role, produces ATP from ADP in the presence of a proton gradient across the membrane. The alpha chain is a regulatory subunit. The sequence is that of ATP synthase subunit alpha from Campylobacter curvus (strain 525.92).